The sequence spans 160 residues: Ribosomal RNA large subunit methyltransferase H (160 aa).

S-adenosyl-L-methionine is bound by residues Leu76, Gly108, and 127 to 132; that span reads LGKMTW.

This sequence belongs to the RNA methyltransferase RlmH family. As to quaternary structure, homodimer.

The protein resides in the cytoplasm. The catalysed reaction is pseudouridine(1915) in 23S rRNA + S-adenosyl-L-methionine = N(3)-methylpseudouridine(1915) in 23S rRNA + S-adenosyl-L-homocysteine + H(+). Specifically methylates the pseudouridine at position 1915 (m3Psi1915) in 23S rRNA. In Rhizobium meliloti (strain 1021) (Ensifer meliloti), this protein is Ribosomal RNA large subunit methyltransferase H.